The following is a 407-amino-acid chain: Imidazolonepropionase (407 aa).

Fe(3+) is bound by residues His-72 and His-74. Residues His-72 and His-74 each contribute to the Zn(2+) site. Residues Arg-81, Tyr-144, and His-177 each contribute to the 4-imidazolone-5-propanoate site. Tyr-144 contacts N-formimidoyl-L-glutamate. Position 242 (His-242) interacts with Fe(3+). Residue His-242 participates in Zn(2+) binding. Gln-245 lines the 4-imidazolone-5-propanoate pocket. Asp-317 is a binding site for Fe(3+). Asp-317 serves as a coordination point for Zn(2+). N-formimidoyl-L-glutamate contacts are provided by Asn-319 and Gly-321. Thr-322 serves as a coordination point for 4-imidazolone-5-propanoate.

It belongs to the metallo-dependent hydrolases superfamily. HutI family. It depends on Zn(2+) as a cofactor. The cofactor is Fe(3+).

Its subcellular location is the cytoplasm. The enzyme catalyses 4-imidazolone-5-propanoate + H2O = N-formimidoyl-L-glutamate. Its pathway is amino-acid degradation; L-histidine degradation into L-glutamate; N-formimidoyl-L-glutamate from L-histidine: step 3/3. In terms of biological role, catalyzes the hydrolytic cleavage of the carbon-nitrogen bond in imidazolone-5-propanoate to yield N-formimidoyl-L-glutamate. It is the third step in the universal histidine degradation pathway. This chain is Imidazolonepropionase, found in Rhizobium rhizogenes (Agrobacterium rhizogenes).